The primary structure comprises 227 residues: tRNA (guanine-N(7)-)-methyltransferase (227 aa).

Residues Glu57, Glu82, Asp109, and Asp132 each contribute to the S-adenosyl-L-methionine site. Asp132 is a catalytic residue. Residues Lys136, Asp168, and 205–208 contribute to the substrate site; that span reads TKFE.

The protein belongs to the class I-like SAM-binding methyltransferase superfamily. TrmB family.

It catalyses the reaction guanosine(46) in tRNA + S-adenosyl-L-methionine = N(7)-methylguanosine(46) in tRNA + S-adenosyl-L-homocysteine. It functions in the pathway tRNA modification; N(7)-methylguanine-tRNA biosynthesis. Functionally, catalyzes the formation of N(7)-methylguanine at position 46 (m7G46) in tRNA. The sequence is that of tRNA (guanine-N(7)-)-methyltransferase from Leifsonia xyli subsp. xyli (strain CTCB07).